A 314-amino-acid polypeptide reads, in one-letter code: tRNA-cytidine(32) 2-sulfurtransferase (314 aa).

Positions 53-58 (SGGKDS) match the PP-loop motif motif. The [4Fe-4S] cluster site is built by cysteine 128, cysteine 131, and cysteine 219.

It belongs to the TtcA family. As to quaternary structure, homodimer. Requires Mg(2+) as cofactor. [4Fe-4S] cluster serves as cofactor.

It localises to the cytoplasm. It carries out the reaction cytidine(32) in tRNA + S-sulfanyl-L-cysteinyl-[cysteine desulfurase] + AH2 + ATP = 2-thiocytidine(32) in tRNA + L-cysteinyl-[cysteine desulfurase] + A + AMP + diphosphate + H(+). It participates in tRNA modification. Its function is as follows. Catalyzes the ATP-dependent 2-thiolation of cytidine in position 32 of tRNA, to form 2-thiocytidine (s(2)C32). The sulfur atoms are provided by the cysteine/cysteine desulfurase (IscS) system. This Colwellia psychrerythraea (strain 34H / ATCC BAA-681) (Vibrio psychroerythus) protein is tRNA-cytidine(32) 2-sulfurtransferase.